The following is a 545-amino-acid chain: Resolvase homolog YokA (545 aa).

Residues N14 to G165 enclose the Resolvase/invertase-type recombinase catalytic domain. Residues L19 to K46 adopt a coiled-coil conformation. Residue S22 is the O-(5'-phospho-DNA)-serine intermediate of the active site. Positions P173–L303 form a DNA-binding region, recombinase. A coiled-coil region spans residues N402–N475.

It in the N-terminal section; belongs to the site-specific recombinase resolvase family.

This Bacillus subtilis (strain 168) protein is Resolvase homolog YokA (yokA).